Reading from the N-terminus, the 637-residue chain is Threonine--tRNA ligase (637 aa).

Positions 1-61 constitute a TGS domain; the sequence is MLNITLPDCS…VEDSAVQIIT (61 aa). Positions 242-533 are catalytic; it reads DHRKLGKQLD…LIENHAGSFP (292 aa). The Zn(2+) site is built by Cys-333, His-384, and His-510.

This sequence belongs to the class-II aminoacyl-tRNA synthetase family. Homodimer. It depends on Zn(2+) as a cofactor.

It localises to the cytoplasm. It carries out the reaction tRNA(Thr) + L-threonine + ATP = L-threonyl-tRNA(Thr) + AMP + diphosphate + H(+). Functionally, catalyzes the attachment of threonine to tRNA(Thr) in a two-step reaction: L-threonine is first activated by ATP to form Thr-AMP and then transferred to the acceptor end of tRNA(Thr). Also edits incorrectly charged L-seryl-tRNA(Thr). The protein is Threonine--tRNA ligase of Neisseria gonorrhoeae (strain ATCC 700825 / FA 1090).